Reading from the N-terminus, the 2890-residue chain is MSKKIPLKNRLRADFTKTPTDLEVPNLLLLQRDSYDSFLYSKDGKESGIEKVFKSIFPIQDAQNRITLEYAGCEFGKAKYTVREAMERGITYSIPLKIKVRLILWEKDAKNGEKTGIKDIKEQSIFIREIPLMTEHTSFIINGVERVVVNQLHRSPGVIFKEEESSTSLNKLIYTGQIIPDRGSWLYFEYDSKDILYARINKRRKVPVTILFRAMDYQKQDIIKIFYPLVKVRYENDKYLIPFASLDANQRMEFDLKDAQGKTILLAGKKLTPRKIKELKENHLEWVEYPMDILLNRYLAEPVMAGKEILLDMLTQLDKNKLDKIHDLGVQEFVIINDLALGHDASIIHSFLADYESLRLLKQTEKIDDENALAAIRIYKVMRPGEPITTEVAKQFVKQLFFDPERYDLTMVGRMKMNHKLGLHVPDYITTLTHEDIITTVKYLMKIKNNQGKIDDRDHLGNRRIRAVGELLANELHSGLVKMQKTIKDKLTTMSGAFDSLMPHDLVNSKMITSTIMEFFMGGQLSQFMDQTNPLSEVTHKRRLSALGEGGLVKDRVGFEARDVHPTHYGRICPIETPEGQNIGLINTLSTFTRVNDLGFIEAPYKKVVDGKVMGETIYLTAIQEDSHVIAPASTPIDEEGNILGDLIETRVEGEIVLNEKSKVTLMDLSSSMLVGVAASLIPFLEHDDANRALMGTNMQRQAVPLLRSDAPIVGTGIEKIIARDSWGAIKANRAGVVEKIDSKNIYILGEGKEEAYIDAYSLQKNLRTNQNTSFNQVPIVKVGDKVEAGQIIADGPSMDRGELALGKNVRVAFMPWNGYNFEDAIVVSERITKDDIFTSTHIYEKEVDARELKHGVEEFTADIPDVKEEALAHLDESGIVKVGTYVSAGMILVGKTSPKGEIKSTPEERLLRAIFGDKAGHVVNKSLYCPPSLEGTVIDVKVFTKKGYEKDARVLSAYEEEKAKLDMEHFDRLTMLNREELLRVSSLLSQAILEEPFSHNGKDYKEGDQIPKEVIASINRFTLASLVKKYSKEVQNQYEITKNNFLEQKKVLGEEHEEKLSILEKDDILPNGVIKKVKLYIATKRKLKVGDKMAGRHGNKGIVSNIVPVADMPYTADGEPVDIVLNPLGVPSRMNIGQILEMHLGLVGKEFGKQIASMLENQTRDFVKELRTKMLEIANAINEKDLLTIHALENCSDEELLEYAKDWSRGVKLAIPVFEGISQEKFYKLFELAKIAMDGKMDLYDGRTGEKMRERVNVGYMYMIKLHHLVDEKVHARSTGPYSLVTHQPVGGKALFGGQRFGEMEVWALEAYGAAHTLKEMLTIKSDDIRGRENAYRAIAKGEQVGESEIPETFYVLTKELQSLALDINIFGDEMDEDGMPKPIVIKEDDRPKDFSSFQLTLASPEKIHSWSYGEVKKPETINYRTLKPERDGLFCMKIFGPTKDYECLCGKYKKPRFKDIGTCEKCGVAITHSKVRRFRMGHIELATPVAHIWYVNSLPSRIGTLLGVKMKDLERVLYYEAYIVKEPGEAAYDNEGTKLVAKYDILNEEQYQNISRRYEDRGFVAQMGGEAIKDLLEEIDLIVLLQSLKEEVKETNSDAKKKKLIKRLKVVESFLNSGNRPEWMMLTVLPVLPPDLRPLVALDGGKFAVSDVNELYRRVINRNQRLKRLMELGAPEIIVRNEKRMLQEAVDVLFDNGRSTNAVKGANKRPLKSLSEIIKGKQGRFRQNLLGKRVDFSGRSVIVVGPNLKMDECGLPKNMALELFKPHLLSKLEERGYATTLKQAKRMIEQKSSEVWECLQEITEGYPVLLNRAPTLHKQSIQAFHPKLIDGKAIQLHPLVCSAFNADFDGDQMAVHVPLSQEAIAECKVLMLSSMNILLPASGKAVAIPSQDMVLGLYYLSLEKSGVKGEHKLFSSVNEIITAIDTKELDIHAKIRVLDKGNIIATSAGRMIIRSILPDFIPTDLWNRPMKKKDIGVLVDYVHKVGGIGITATFLDNLKTLGFRYATKAGISISMEDIITPKDKQKMVEKAKVEVKKIQQQYDQGLLTDQERYNKIIDTWTEVNDKMSKEMMTAIAKDKEGFNSIYMMADSGARGSAAQIRQLSAMRGLMTKPDGSIIETPIISNFKEGLNVLEYFNSTHGARKGLADTALKTANAGYLTRKLIDVSQNVKVVSDDCGTHEGIEITDIAVGSELIEPLEERIFGRVLLEDVIDPITNEILLYADTLIDEESAKKVVEAGIKSITIRTPVTCKAPKGVCAKCYGLNLGEGKMSYPGEAVGVVAAQSIGEPGTQLTLRTFHVGGTASRSQDEREIVASKEGFVRFYNLKTYTNKEGKNIIANRRNASILVVEPKIKAPFDGELSIETVYEEVIVSVKNGEQEAKFVLRRSDIVKPSELAGVGGKIEGKVYLHYANGHKIHKGGSIADIIQEGWNVPNRIPYASELLVKDNDPIVQDVYVKEKGVIKYYVLEVNHLERTHGIKKGDMVSEKGLFAVIADDNGREAARHYIARGSEILIDDNSEVSANSLISKPTTNTLKTIATWDPYNTPIIADFEGKVSFVDIIAGVTVAEKEDENTGITSLVVNDYIPSGYKPSLFLEGVNGEEVRYFLEPKTSIAISDGSSVEQAEVLAKIPKATVKSKDITGGLPRVSELFEARKPKPKDVAILSEIDGIVSFGKAIRNKEHIIVTSKDGRKMDYLVDKGKQILVHADEFVHAGEAMTDGVVSNHDILRISGEKELYKYIVSEVQQVYRRQGVSIADKHIEIIVSQMLRQVRILDSGDSKFIEGDLVSKKLFKEENARVIALKGEPAIAEPVLLGITRAAIGSDSIISAASFQETTKVLTEASIAMKKDFLEDLKENVVLGRMIPVGTGMYKNKKIVLRTIEDSPKI.

The DNA-directed RNA polymerase subunit beta stretch occupies residues 1 to 1377; it reads MSKKIPLKNR…DINIFGDEMD (1377 aa). Residues 1384–2890 form a DNA-directed RNA polymerase subunit beta' region; it reads PIVIKEDDRP…LRTIEDSPKI (1507 aa). 4 residues coordinate Zn(2+): C1449, C1451, C1465, and C1468. The Mg(2+) site is built by D1849, D1851, and D1853. C2179, C2253, C2260, and C2263 together coordinate Zn(2+).

It in the N-terminal section; belongs to the RNA polymerase beta chain family. This sequence in the C-terminal section; belongs to the RNA polymerase beta' chain family. In terms of assembly, the RNAP catalytic core consists of 2 alpha, 1 beta/beta' and 1 omega subunit. When a sigma factor is associated with the core the holoenzyme is formed, which can initiate transcription. Requires Mg(2+) as cofactor. It depends on Zn(2+) as a cofactor.

The enzyme catalyses RNA(n) + a ribonucleoside 5'-triphosphate = RNA(n+1) + diphosphate. In terms of biological role, DNA-dependent RNA polymerase catalyzes the transcription of DNA into RNA using the four ribonucleoside triphosphates as substrates. The chain is Bifunctional DNA-directed RNA polymerase subunit beta-beta' (rpoBC) from Helicobacter acinonychis (strain Sheeba).